The primary structure comprises 269 residues: Intermembrane phospholipid transport system ATP-binding protein MlaF (269 aa).

Residues 9 to 245 (VDMRDVSFTR…PDPRVRQFLD (237 aa)) enclose the ABC transporter domain. Residue 41–48 (GPSGIGKT) participates in ATP binding.

This sequence belongs to the ABC transporter superfamily. MlaF family. The complex is composed of two ATP-binding proteins (MlaF), two transmembrane proteins (MlaE), two cytoplasmic solute-binding proteins (MlaB) and six periplasmic solute-binding proteins (MlaD).

It is found in the cell inner membrane. Part of the ABC transporter complex MlaFEDB, which is involved in a phospholipid transport pathway that maintains lipid asymmetry in the outer membrane by retrograde trafficking of phospholipids from the outer membrane to the inner membrane. Responsible for energy coupling to the transport system. In Escherichia coli O157:H7, this protein is Intermembrane phospholipid transport system ATP-binding protein MlaF.